Reading from the N-terminus, the 218-residue chain is Small ribosomal subunit protein uS3c (218 aa).

The 76-residue stretch at 43–118 (IKNYVQKNMR…KLNIAITRIA (76 aa)) folds into the KH type-2 domain.

Belongs to the universal ribosomal protein uS3 family. Part of the 30S ribosomal subunit.

Its subcellular location is the plastid. It localises to the chloroplast. The sequence is that of Small ribosomal subunit protein uS3c (rps3) from Buxus microphylla (Littleleaf boxwood).